We begin with the raw amino-acid sequence, 409 residues long: Putative competence-damage inducible protein (409 aa).

It belongs to the CinA family.

The protein is Putative competence-damage inducible protein of Clostridium botulinum (strain Kyoto / Type A2).